We begin with the raw amino-acid sequence, 371 residues long: Histidinol-phosphate aminotransferase (371 aa).

Lysine 229 carries the N6-(pyridoxal phosphate)lysine modification.

Belongs to the class-II pyridoxal-phosphate-dependent aminotransferase family. Histidinol-phosphate aminotransferase subfamily. In terms of assembly, homodimer. The cofactor is pyridoxal 5'-phosphate.

The catalysed reaction is L-histidinol phosphate + 2-oxoglutarate = 3-(imidazol-4-yl)-2-oxopropyl phosphate + L-glutamate. Its pathway is amino-acid biosynthesis; L-histidine biosynthesis; L-histidine from 5-phospho-alpha-D-ribose 1-diphosphate: step 7/9. The chain is Histidinol-phosphate aminotransferase from Roseiflexus castenholzii (strain DSM 13941 / HLO8).